The sequence spans 276 residues: F420-dependent methylenetetrahydromethanopterin dehydrogenase (276 aa).

Positions 253 to 276 are disordered; it reads TVLRTPHGKEGKTLSKKDLLAKPE. Over residues 259–276 the composition is skewed to basic and acidic residues; sequence HGKEGKTLSKKDLLAKPE.

It belongs to the MTD family. As to quaternary structure, found to be tightly associated with methyl-coenzyme M methylreductase.

The enzyme catalyses 5,10-methylenetetrahydromethanopterin + oxidized coenzyme F420-(gamma-L-Glu)(n) + 2 H(+) = 5,10-methenyl-5,6,7,8-tetrahydromethanopterin + reduced coenzyme F420-(gamma-L-Glu)(n). The protein operates within one-carbon metabolism; methanogenesis from CO(2); 5,10-methylene-5,6,7,8-tetrahydromethanopterin from 5,10-methenyl-5,6,7,8-tetrahydromethanopterin (coenzyme F420 route): step 1/1. Its activity is regulated as follows. Activity requires salt; 100 mM sodium or potassium salts of chloride, phosphate or sulfate are equally effective. Not inactivated by O(2). Inhibited by hydrogen-producing 5,10-methenyltetrahydromethanopterin hydrogenase which has a higher affinity for their shared substrate. Enzyme is O(2)-stable and strictly dependent on coenzyme F420. In terms of biological role, catalyzes the reversible reduction of methenyl-H(4)MPT(+) to methylene-H(4)MPT. This Methanothermobacter marburgensis (strain ATCC BAA-927 / DSM 2133 / JCM 14651 / NBRC 100331 / OCM 82 / Marburg) (Methanobacterium thermoautotrophicum) protein is F420-dependent methylenetetrahydromethanopterin dehydrogenase.